Here is a 132-residue protein sequence, read N- to C-terminus: ATP synthase epsilon chain (132 aa).

Belongs to the ATPase epsilon chain family. As to quaternary structure, F-type ATPases have 2 components, CF(1) - the catalytic core - and CF(0) - the membrane proton channel. CF(1) has five subunits: alpha(3), beta(3), gamma(1), delta(1), epsilon(1). CF(0) has three main subunits: a, b and c.

It is found in the cell membrane. In terms of biological role, produces ATP from ADP in the presence of a proton gradient across the membrane. This is ATP synthase epsilon chain from Bacillus velezensis (strain DSM 23117 / BGSC 10A6 / LMG 26770 / FZB42) (Bacillus amyloliquefaciens subsp. plantarum).